We begin with the raw amino-acid sequence, 847 residues long: Leucine--tRNA ligase (847 aa).

The 'HIGH' region signature appears at 43–53; sequence PYPSGKLHMGH. Residues 607-611 carry the 'KMSKS' region motif; the sequence is KMSKS. ATP is bound at residue Lys-610.

Belongs to the class-I aminoacyl-tRNA synthetase family.

The protein localises to the cytoplasm. It carries out the reaction tRNA(Leu) + L-leucine + ATP = L-leucyl-tRNA(Leu) + AMP + diphosphate. In Buchnera aphidicola subsp. Cinara cedri (strain Cc), this protein is Leucine--tRNA ligase.